A 257-amino-acid polypeptide reads, in one-letter code: Imidazole glycerol phosphate synthase subunit HisF (257 aa).

Residues Asp-11 and Asp-130 contribute to the active site.

The protein belongs to the HisA/HisF family. Heterodimer of HisH and HisF.

Its subcellular location is the cytoplasm. It catalyses the reaction 5-[(5-phospho-1-deoxy-D-ribulos-1-ylimino)methylamino]-1-(5-phospho-beta-D-ribosyl)imidazole-4-carboxamide + L-glutamine = D-erythro-1-(imidazol-4-yl)glycerol 3-phosphate + 5-amino-1-(5-phospho-beta-D-ribosyl)imidazole-4-carboxamide + L-glutamate + H(+). Its pathway is amino-acid biosynthesis; L-histidine biosynthesis; L-histidine from 5-phospho-alpha-D-ribose 1-diphosphate: step 5/9. In terms of biological role, IGPS catalyzes the conversion of PRFAR and glutamine to IGP, AICAR and glutamate. The HisF subunit catalyzes the cyclization activity that produces IGP and AICAR from PRFAR using the ammonia provided by the HisH subunit. In Afipia carboxidovorans (strain ATCC 49405 / DSM 1227 / KCTC 32145 / OM5) (Oligotropha carboxidovorans), this protein is Imidazole glycerol phosphate synthase subunit HisF.